The chain runs to 782 residues: Acetazolamide conferring resistance protein zam (782 aa).

An RNB domain is found at 270 to 579; that stretch reads EVALSLESQA…QRLLKLVLTE (310 aa). Positions 655–736 constitute an S1 motif domain; sequence GEIFRGLITG…YRQQIDLGAV (82 aa). The tract at residues 737–782 is disordered; the sequence is NNAPKDSANMDFDDDDEDGDEREEQDTMDWDAMEDGDDDEGGAVIF. Residues 747-782 show a composition bias toward acidic residues; the sequence is DFDDDDEDGDEREEQDTMDWDAMEDGDDDEGGAVIF.

The protein belongs to the RNR ribonuclease family.

Functionally, not known; control resistance to the carbonic anhydrase inhibitor acetazolamide. This Synechocystis sp. (strain ATCC 27184 / PCC 6803 / Kazusa) protein is Acetazolamide conferring resistance protein zam (zam).